A 322-amino-acid chain; its full sequence is Fructose-1,6-bisphosphatase class 1 3 (322 aa).

Mg(2+) is bound by residues Glu84, Asp103, Leu105, and Asp106. Residues 106-109, Asn198, and Lys262 each bind substrate; that span reads DGSS. Glu268 serves as a coordination point for Mg(2+).

Belongs to the FBPase class 1 family. Homotetramer. It depends on Mg(2+) as a cofactor.

It localises to the cytoplasm. It carries out the reaction beta-D-fructose 1,6-bisphosphate + H2O = beta-D-fructose 6-phosphate + phosphate. The protein operates within carbohydrate biosynthesis; gluconeogenesis. The protein is Fructose-1,6-bisphosphatase class 1 3 of Pseudoalteromonas translucida (strain TAC 125).